A 479-amino-acid chain; its full sequence is Glutamate receptor U1 (479 aa).

The first 17 residues, 1-17 (MEKSLLFLFAVTLLSVG), serve as a signal peptide directing secretion. Topologically, residues 18–163 (CTDAGESKGS…LFGFLTPFSK (146 aa)) are extracellular. The N-linked (GlcNAc...) asparagine glycan is linked to Asn79. The helical transmembrane segment at 164–184 (ETWIGILVAYMVTSLCLFLVG) threads the bilayer. At 185 to 229 (RLSPCEWTELSTEQNNFTFLNSLWFGAGAFTLQGAEPHPKSVSAR) the chain is on the cytoplasmic side. Residues 230 to 250 (IIAVIWWIFSIVLVAAYIASF) traverse the membrane as a helical segment. The Extracellular portion of the chain corresponds to 251-414 (AAFLNSDSVQ…AGWNPVQPHT (164 aa)). Asn282 is a glycosylation site (N-linked (GlcNAc...) asparagine). Residues 415-435 (LGGIFLILGIGLALGVIAALI) form a helical membrane-spanning segment. Topologically, residues 436–479 (ELVLKARNNADQQKKSCCSAFSEEMGERLGTNKENQGAVDSVKS) are cytoplasmic.

It belongs to the glutamate-gated ion channel (TC 1.A.10.1) family. As to quaternary structure, homomeric.

It localises to the cell membrane. The protein localises to the postsynaptic cell membrane. In terms of biological role, receptor for glutamate. L-glutamate acts as an excitatory neurotransmitter at many synapses in the central nervous system. The postsynaptic actions of Glu are mediated by a variety of receptors that are named according to their selective agonists. This receptor binds domoate &gt; kainate &gt; AMPA &gt; NBQX &gt; glutamate. This Xenopus laevis (African clawed frog) protein is Glutamate receptor U1 (kbp).